A 196-amino-acid chain; its full sequence is GTP cyclohydrolase-2 (196 aa).

Residue 49–53 (RVHSE) coordinates GTP. Positions 54, 65, and 67 each coordinate Zn(2+). Residues Gln-70, 92 to 94 (EGR), and Thr-114 each bind GTP. Asp-126 serves as the catalytic Proton acceptor. Arg-128 functions as the Nucleophile in the catalytic mechanism. Positions 149 and 154 each coordinate GTP.

Belongs to the GTP cyclohydrolase II family. As to quaternary structure, homodimer. Zn(2+) is required as a cofactor.

The enzyme catalyses GTP + 4 H2O = 2,5-diamino-6-hydroxy-4-(5-phosphoribosylamino)-pyrimidine + formate + 2 phosphate + 3 H(+). It functions in the pathway cofactor biosynthesis; riboflavin biosynthesis; 5-amino-6-(D-ribitylamino)uracil from GTP: step 1/4. In terms of biological role, catalyzes the conversion of GTP to 2,5-diamino-6-ribosylamino-4(3H)-pyrimidinone 5'-phosphate (DARP), formate and pyrophosphate. This is GTP cyclohydrolase-2 from Shigella boydii serotype 18 (strain CDC 3083-94 / BS512).